The sequence spans 384 residues: Acetylgalactosaminyl-O-glycosyl-glycoprotein beta-1,3-N-acetylglucosaminyltransferase (384 aa).

Residues 1-12 lie on the Cytoplasmic side of the membrane; sequence MAFPCRRSLTAK. Residues 13–31 form a helical; Signal-anchor for type II membrane protein membrane-spanning segment; sequence TLACLLVGVSFLALQQWFL. Residues 32 to 384 lie on the Lumenal side of the membrane; sequence QAPRSPREER…LSCDRGHRVS (353 aa). Residues 34-68 are disordered; the sequence is PRSPREERSPQEETPEGPTDAPAADEPPSELVPGP. Asparagine 73, asparagine 77, and asparagine 196 each carry an N-linked (GlcNAc...) asparagine glycan.

This sequence belongs to the glycosyltransferase 31 family. In terms of tissue distribution, present in stomach and colon (at protein level). Restricted in the stomach, colon and small intestine, where core 3 structure is present.

The protein resides in the golgi apparatus membrane. The enzyme catalyses a 3-O-[N-acetyl-alpha-D-galactosaminyl]-L-threonyl-[protein] + UDP-N-acetyl-alpha-D-glucosamine = a 3-O-[N-acetyl-beta-D-glucosaminyl-(1-&gt;3)-N-acetyl-alpha-D-galactosaminyl]-L-threonyl-[protein] + UDP + H(+). The catalysed reaction is a 3-O-[N-acetyl-alpha-D-galactosaminyl]-L-seryl-[protein] + UDP-N-acetyl-alpha-D-glucosamine = 3-O-[N-acetyl-beta-D-glucosaminyl-(1-&gt;3)-N-acetyl-alpha-D-galactosaminyl]-L-seryl-[protein] + UDP + H(+). It functions in the pathway protein modification; protein glycosylation. Its function is as follows. Beta-1,3-N-acetylglucosaminyltransferase that synthesizes the core 3 structure of the O-glycan, an important precursor in the biosynthesis of mucin-type glycoproteins. Plays an important role in the synthesis of mucin-type O-glycans in digestive organs. This is Acetylgalactosaminyl-O-glycosyl-glycoprotein beta-1,3-N-acetylglucosaminyltransferase (B3GNT6) from Homo sapiens (Human).